The following is a 128-amino-acid chain: Glycine cleavage system H protein (128 aa).

Residues T25–K107 form the Lipoyl-binding domain. At K66 the chain carries N6-lipoyllysine.

This sequence belongs to the GcvH family. In terms of assembly, the glycine cleavage system is composed of four proteins: P, T, L and H. (R)-lipoate is required as a cofactor.

Functionally, the glycine cleavage system catalyzes the degradation of glycine. The H protein shuttles the methylamine group of glycine from the P protein to the T protein. This Neisseria meningitidis serogroup C (strain 053442) protein is Glycine cleavage system H protein.